Consider the following 244-residue polypeptide: PHD finger protein ALFIN-LIKE 2 (244 aa).

Positions 137 to 148 (LSDRKHGRDNKS) are enriched in basic and acidic residues. A disordered region spans residues 137-178 (LSDRKHGRDNKSGADNGSKSRHSGKRANDVQTKTSRPAVVDD). The segment at 187–239 (ETLCGTCGGRYNANEFWIGCDICERWFHGKCVRITPAKAEHIKHYKCPDCSSS) adopts a PHD-type zinc-finger fold.

This sequence belongs to the Alfin family. As to quaternary structure, interacts with H3K4me3 and to a lesser extent with H3K4me2.

It localises to the nucleus. Functionally, histone-binding component that specifically recognizes H3 tails trimethylated on 'Lys-4' (H3K4me3), which mark transcription start sites of virtually all active genes. The protein is PHD finger protein ALFIN-LIKE 2 of Oryza sativa subsp. indica (Rice).